The following is an 842-amino-acid chain: Axin-1 (842 aa).

Residues 1-75 (MSVKGKGFPL…LDLGYEPEGS (75 aa)) are disordered. Residues 34–46 (TTDQRPFSHTYYS) show a composition bias toward polar residues. One can recognise an RGS domain in the interval 88 to 211 (SLHSLLDDQD…LKSDIYLEYT (124 aa)). 9 disordered regions span residues 218 to 242 (PKNY…PTLN), 277 to 297 (SHCA…PGTW), 316 to 344 (TSAN…DGIP), 414 to 451 (KRVR…NSRY), 482 to 532 (KTPG…AKVD), 543 to 562 (YHHV…DGES), 615 to 637 (KKAD…EDSE), 656 to 675 (HKKS…TELA), and 729 to 754 (RLEE…KNVS). Residues 316–339 (TSANDSEQQSMSSDADTMSLTDSS) are compositionally biased toward polar residues. An interaction with GSK3B region spans residues 348 to 433 (LRKHYRREMQ…DGDVSSGPSV (86 aa)). The interval 434–508 (ISHKLPSGPP…RSPDGHLSKT (75 aa)) is interaction with beta-catenin. Positions 543–552 (YHHVHHHGGV) are enriched in basic residues. Residues 615–626 (KKADLGKSESAS) are compositionally biased toward basic and acidic residues. The DIX domain occupies 760–842 (CDNIVVAYYF…KIIGQVEKID (83 aa)).

In terms of assembly, homodimer. Interacts with hwa; leading to promote the tankyrase-mediated degradation of axin1. Post-translationally, ADP-ribosylated by tankyrase tnks and tnks2. Poly-ADP-ribosylated protein is recognized by rnf146, followed by ubiquitination at 'Lys-48' and subsequent activation of the Wnt signaling pathway. Ubiquitinated by rnf146 when poly-ADP-ribosylated, leading to its degradation and subsequent activation of the Wnt signaling pathway.

Its subcellular location is the cytoplasm. The protein localises to the nucleus. The protein resides in the membrane. It is found in the cell membrane. Component of the beta-catenin destruction complex required for regulating ctnnb1 levels through phosphorylation and ubiquitination, and modulating Wnt-signaling. Controls dorsoventral patterning via two opposing effects; down-regulates ctnnb1 to inhibit the Wnt signaling pathway and ventralize embryos, but also dorsalizes embryos by activating a Wnt-independent JNK signaling pathway. The protein is Axin-1 (axin1) of Xenopus laevis (African clawed frog).